The primary structure comprises 300 residues: Haloalkane dehalogenase (300 aa).

The region spanning 32 to 155 (AIVFQHGNPT…PAVRGVFQGF (124 aa)) is the AB hydrolase-1 domain. Residue D109 is the Nucleophile of the active site. Catalysis depends on E133, which acts as the Proton donor. The Proton acceptor role is filled by H273.

Belongs to the haloalkane dehalogenase family. Type 2 subfamily. As to quaternary structure, monomer.

It catalyses the reaction 1-haloalkane + H2O = a halide anion + a primary alcohol + H(+). Catalyzes hydrolytic cleavage of carbon-halogen bonds in halogenated aliphatic compounds, leading to the formation of the corresponding primary alcohols, halide ions and protons. In Mycobacterium tuberculosis (strain ATCC 25177 / H37Ra), this protein is Haloalkane dehalogenase.